The primary structure comprises 328 residues: Arabinose 5-phosphate isomerase KdsD (328 aa).

The 144-residue stretch at 41-184 (ACEKMFNCTG…AVALLKARGF (144 aa)) folds into the SIS domain. Residues 75 to 76 (GT), histidine 82, histidine 88, 114 to 123 (ALIPVLKRLH), and 148 to 150 (KVP) each bind substrate. Histidine 82 is a binding site for Zn(2+). The CBS 1 domain maps to 210 to 268 (MHTGDEIPHVNKHATLRDALLEITRKNLGMTVICDESMKIDGIFTDGDLRRVFDMGGDM). Glutamate 275 is a binding site for substrate. The CBS 2 domain maps to 277–328 (MTPGGIRVRPGILAVDALNLMQSRHITSVLVADGDQLLGVLHMHDLLRAGVV).

Belongs to the SIS family. GutQ/KpsF subfamily. As to quaternary structure, homotetramer.

The catalysed reaction is D-arabinose 5-phosphate = D-ribulose 5-phosphate. It participates in carbohydrate biosynthesis; 3-deoxy-D-manno-octulosonate biosynthesis; 3-deoxy-D-manno-octulosonate from D-ribulose 5-phosphate: step 1/3. It functions in the pathway bacterial outer membrane biogenesis; lipopolysaccharide biosynthesis. Involved in the biosynthesis of 3-deoxy-D-manno-octulosonate (KDO), a unique 8-carbon sugar component of lipopolysaccharides (LPSs). Catalyzes the reversible aldol-ketol isomerization between D-ribulose 5-phosphate (Ru5P) and D-arabinose 5-phosphate (A5P). In Salmonella typhimurium (strain LT2 / SGSC1412 / ATCC 700720), this protein is Arabinose 5-phosphate isomerase KdsD (kdsD).